A 61-amino-acid chain; its full sequence is UPF0434 protein PFLU_3771 (61 aa).

The protein belongs to the UPF0434 family.

In Pseudomonas fluorescens (strain SBW25), this protein is UPF0434 protein PFLU_3771.